The primary structure comprises 265 residues: Hydroxyethylthiazole kinase 2 (265 aa).

Met-39 is a substrate binding site. Positions 115 and 168 each coordinate ATP. Gly-195 contacts substrate.

The protein belongs to the Thz kinase family. Requires Mg(2+) as cofactor.

It catalyses the reaction 5-(2-hydroxyethyl)-4-methylthiazole + ATP = 4-methyl-5-(2-phosphooxyethyl)-thiazole + ADP + H(+). The protein operates within cofactor biosynthesis; thiamine diphosphate biosynthesis; 4-methyl-5-(2-phosphoethyl)-thiazole from 5-(2-hydroxyethyl)-4-methylthiazole: step 1/1. Its function is as follows. Catalyzes the phosphorylation of the hydroxyl group of 4-methyl-5-beta-hydroxyethylthiazole (THZ). The polypeptide is Hydroxyethylthiazole kinase 2 (Clostridium botulinum (strain Langeland / NCTC 10281 / Type F)).